The following is a 351-amino-acid chain: Gene 58 protein (351 aa).

11 helical membrane-spanning segments follow: residues 14–34 (FSTG…ATVF), 43–63 (QSVL…FCAV), 70–90 (LGLL…SWSL), 97–117 (LVPG…IVCF), 133–153 (LGFL…IYLT), 155–175 (VMFA…SHVW), 214–234 (LICL…LVMF), 240–260 (GVST…SLII), 268–288 (AVYS…GYLF), 293–313 (LSML…CLLY), and 328–348 (FILN…LLAQ).

It belongs to the herpesviridae BMRF2 family.

It is found in the host membrane. The polypeptide is Gene 58 protein (58) (Connochaetes taurinus (Blue wildebeest)).